A 489-amino-acid polypeptide reads, in one-letter code: Dihydropyrimidinase 1 (489 aa).

Residues His61, His63, and Lys156 each contribute to the Zn(2+) site. At Lys156 the chain carries N6-carboxylysine. Tyr161 is a binding site for substrate. His189 and His245 together coordinate Zn(2+). Ser295 serves as a coordination point for substrate. Asp323 lines the Zn(2+) pocket. Residue Asn344 coordinates substrate.

This sequence belongs to the metallo-dependent hydrolases superfamily. Hydantoinase/dihydropyrimidinase family. Homotetramer. Requires Zn(2+) as cofactor. Post-translationally, carboxylation allows a single lysine to coordinate two zinc ions.

Its subcellular location is the nucleus. The enzyme catalyses 5,6-dihydrouracil + H2O = 3-(carbamoylamino)propanoate + H(+). The protein is Dihydropyrimidinase 1 (dhp-1) of Caenorhabditis briggsae.